We begin with the raw amino-acid sequence, 259 residues long: MLLNIANSIGKRTIRLAQSIGKFSIFSLAAITSIIRPPLYFSLIIKQLLFIGFYSLPVVAMTTFFSGAVLALQSYTGFSRFSAESSIATVVVLSLTRELGPVLAGLMVAGRVGASIAAEIGTMRVTEQVDALYTLSTDSIKYLVFPKVIAAIITMPCLVLIGDVIGVMGGYLVGVYKLDFNSSTYLTSTFQYLEPIDVISGLVKAGVFGFIISIISCYSGYYSGKGAKGVGRATTSAVVNSSILILISNYLITELFFKV.

5 helical membrane passes run 25-45, 49-69, 148-168, 195-215, and 237-257; these read IFSL…SLII, LFIG…SGAV, VIAA…IGVM, PIDV…ISII, and AVVN…ELFF.

The protein belongs to the MlaE permease family.

It is found in the cell inner membrane. In terms of biological role, could be part of an ABC transporter complex. In Rickettsia bellii (strain RML369-C), this protein is Probable ABC transporter permease protein RBE_1340.